Reading from the N-terminus, the 874-residue chain is Alanine--tRNA ligase (874 aa).

H563, H567, C665, and H669 together coordinate Zn(2+).

This sequence belongs to the class-II aminoacyl-tRNA synthetase family. Zn(2+) is required as a cofactor.

It is found in the cytoplasm. It catalyses the reaction tRNA(Ala) + L-alanine + ATP = L-alanyl-tRNA(Ala) + AMP + diphosphate. Its function is as follows. Catalyzes the attachment of alanine to tRNA(Ala) in a two-step reaction: alanine is first activated by ATP to form Ala-AMP and then transferred to the acceptor end of tRNA(Ala). Also edits incorrectly charged Ser-tRNA(Ala) and Gly-tRNA(Ala) via its editing domain. This is Alanine--tRNA ligase from Aeromonas salmonicida (strain A449).